The chain runs to 313 residues: N-acetyl-gamma-glutamyl-phosphate reductase (313 aa).

Cys117 is an active-site residue.

Belongs to the NAGSA dehydrogenase family. Type 2 subfamily.

Its subcellular location is the cytoplasm. It catalyses the reaction N-acetyl-L-glutamate 5-semialdehyde + phosphate + NADP(+) = N-acetyl-L-glutamyl 5-phosphate + NADPH + H(+). It participates in amino-acid biosynthesis; L-arginine biosynthesis; N(2)-acetyl-L-ornithine from L-glutamate: step 3/4. In terms of biological role, catalyzes the NADPH-dependent reduction of N-acetyl-5-glutamyl phosphate to yield N-acetyl-L-glutamate 5-semialdehyde. The chain is N-acetyl-gamma-glutamyl-phosphate reductase from Burkholderia cenocepacia (strain HI2424).